The chain runs to 766 residues: Serine/threonine-protein kinase PKH1 (766 aa).

Residues 1 to 52 (MGNRSLTEADHALLSKPLVPTSAEHTQTQEYPRPFVDGSNSQSGSELQASPQ) are disordered. A compositionally biased stretch (polar residues) spans 38–52 (GSNSQSGSELQASPQ). Positions 125–391 (FKFGEQLGDG…IKQIKAHLFF (267 aa)) constitute a Protein kinase domain. ATP contacts are provided by residues 135-137 (SYS) and K154. The interval 156–201 (LSKEYLIRQKKVKYVTVEKLALQKLNGTKGIFKLFFTFQDEASLYF) is PIF-pocket. Residues 204 to 206 (EYA) and D210 contribute to the ATP site. D249 (proton acceptor) is an active-site residue. E253 and D267 together coordinate ATP. 2 positions are modified to phosphoserine: S294 and S296. Polar residues predominate over residues 476-495 (TSQPKLGSKSSTSVRSASNN). Disordered stretches follow at residues 476 to 529 (TSQP…NRSR) and 725 to 745 (PEEG…SSSN). Residues 511–521 (SVSSPSISTTS) show a composition bias toward low complexity. Over residues 735 to 745 (PTSLQTRSSSN) the composition is skewed to polar residues.

It belongs to the protein kinase superfamily. AGC Ser/Thr protein kinase family. PDPK1 subfamily.

The enzyme catalyses L-seryl-[protein] + ATP = O-phospho-L-seryl-[protein] + ADP + H(+). It carries out the reaction L-threonyl-[protein] + ATP = O-phospho-L-threonyl-[protein] + ADP + H(+). Activates YPK1 by phosphorylating of a threonine residue. This is Serine/threonine-protein kinase PKH1 (PKH1) from Saccharomyces cerevisiae (strain ATCC 204508 / S288c) (Baker's yeast).